A 326-amino-acid polypeptide reads, in one-letter code: DNA-directed RNA polymerase subunit alpha (326 aa).

The interval 1–231 (MQTALLKPKI…DQLSVFAALE (231 aa)) is alpha N-terminal domain (alpha-NTD). Residues 247–326 (IDPILLRPVD…ENWPPAGLEK (80 aa)) form an alpha C-terminal domain (alpha-CTD) region.

It belongs to the RNA polymerase alpha chain family. In terms of assembly, homodimer. The RNAP catalytic core consists of 2 alpha, 1 beta, 1 beta' and 1 omega subunit. When a sigma factor is associated with the core the holoenzyme is formed, which can initiate transcription.

The catalysed reaction is RNA(n) + a ribonucleoside 5'-triphosphate = RNA(n+1) + diphosphate. DNA-dependent RNA polymerase catalyzes the transcription of DNA into RNA using the four ribonucleoside triphosphates as substrates. The chain is DNA-directed RNA polymerase subunit alpha from Cupriavidus necator (strain ATCC 17699 / DSM 428 / KCTC 22496 / NCIMB 10442 / H16 / Stanier 337) (Ralstonia eutropha).